The primary structure comprises 296 residues: Probable transcription factor At1g44810 (296 aa).

The tract at residues 1–119 (MNKKLLNPLE…AKKVSGDDDN (119 aa)) is disordered. Acidic residues predominate over residues 19–28 (EDVDEEISSG). The span at 52-72 (TQTLNSPSTEAPTLDSGSETN) shows a compositional bias: polar residues. Residues 97 to 119 (RASEGTSSKDIKRAKKVSGDDDN) show a composition bias toward basic and acidic residues.

Belongs to the GeBP family.

The protein is Probable transcription factor At1g44810 of Arabidopsis thaliana (Mouse-ear cress).